The primary structure comprises 102 residues: Small ribosomal subunit protein uS10 (102 aa).

It belongs to the universal ribosomal protein uS10 family. Part of the 30S ribosomal subunit.

Its function is as follows. Involved in the binding of tRNA to the ribosomes. The protein is Small ribosomal subunit protein uS10 of Exiguobacterium sibiricum (strain DSM 17290 / CCUG 55495 / CIP 109462 / JCM 13490 / 255-15).